An 857-amino-acid chain; its full sequence is Median body protein (857 aa).

Coiled coils occupy residues 169 to 546 (HNAL…MRTE) and 571 to 793 (LAHL…TKAM).

The protein localises to the cytoplasm. It localises to the cytoskeleton. In terms of biological role, structural component of the ventral disk involved in maintanance of a domed conformation of the disk required for proper attachment. May have a role in immobilizing the microtubules between cell divisions. This Giardia intestinalis (strain ATCC 50803 / WB clone C6) (Giardia lamblia) protein is Median body protein.